A 252-amino-acid polypeptide reads, in one-letter code: Triosephosphate isomerase (252 aa).

9 to 11 (NWK) serves as a coordination point for substrate. H95 acts as the Electrophile in catalysis. Catalysis depends on E167, which acts as the Proton acceptor. Residues G173, S213, and 234 to 235 (GG) contribute to the substrate site. Residue S213 is modified to Phosphoserine.

It belongs to the triosephosphate isomerase family. In terms of assembly, homodimer.

The protein resides in the cytoplasm. It catalyses the reaction D-glyceraldehyde 3-phosphate = dihydroxyacetone phosphate. The protein operates within carbohydrate biosynthesis; gluconeogenesis. Its pathway is carbohydrate degradation; glycolysis; D-glyceraldehyde 3-phosphate from glycerone phosphate: step 1/1. Functionally, involved in the gluconeogenesis. Catalyzes stereospecifically the conversion of dihydroxyacetone phosphate (DHAP) to D-glyceraldehyde-3-phosphate (G3P). The polypeptide is Triosephosphate isomerase (Oceanobacillus iheyensis (strain DSM 14371 / CIP 107618 / JCM 11309 / KCTC 3954 / HTE831)).